A 129-amino-acid polypeptide reads, in one-letter code: Small ribosomal subunit protein uS11 (129 aa).

The protein belongs to the universal ribosomal protein uS11 family. As to quaternary structure, part of the 30S ribosomal subunit. Interacts with proteins S7 and S18. Binds to IF-3.

Its function is as follows. Located on the platform of the 30S subunit, it bridges several disparate RNA helices of the 16S rRNA. Forms part of the Shine-Dalgarno cleft in the 70S ribosome. This chain is Small ribosomal subunit protein uS11, found in Yersinia enterocolitica serotype O:8 / biotype 1B (strain NCTC 13174 / 8081).